Reading from the N-terminus, the 368-residue chain is ICEBs1 integrase (368 aa).

One can recognise a Core-binding (CB) domain in the interval 61-143 (VSFPTLISIY…SLSKIFDTAV (83 aa)). Residues 164–362 (KKMKFWRPEE…YPNKQKEMAD (199 aa)) form the Tyr recombinase domain. Residues Arg201, Lys239, His313, Arg316, and His339 contribute to the active site. Catalysis depends on Tyr349, which acts as the O-(3'-phospho-DNA)-tyrosine intermediate.

The protein belongs to the 'phage' integrase family.

Its function is as follows. Putative integrase that is involved in the insertion of the integrative and conjugative element ICEBs1. Required for the excision of ICEBs1 from the donor cell genome and subsequent integration in the recipient cell genome. Appears not to be transferred through the mating pore. Integration of ICEBs1 involves an attachment site in the chromosome, attB, and a site in the circular form of ICEBs1, attICEBs1. This chain is ICEBs1 integrase (int), found in Bacillus subtilis (strain 168).